We begin with the raw amino-acid sequence, 182 residues long: Interferon beta (182 aa).

The signal sequence occupies residues M1–S21. The residue at position 24 (Y24) is a Phosphotyrosine. N-linked (GlcNAc...) asparagine glycosylation is found at N50, N90, and N97.

The protein belongs to the alpha/beta interferon family. Monomer. Post-translationally, this beta interferon does not have a disulfide bond.

It is found in the secreted. Type I interferon cytokine that plays a key role in the innate immune response to infection, developing tumors and other inflammatory stimuli. Signals via binding to high-affinity (IFNAR2) and low-affinity (IFNAR1) heterodimeric receptor, activating the canonical Jak-STAT signaling pathway resulting in transcriptional activation or repression of interferon-regulated genes that encode the effectors of the interferon response, such as antiviral proteins, regulators of cell proliferation and differentiation, and immunoregulatory proteins. Signals mostly via binding to a IFNAR1-IFNAR2 heterodimeric receptor, but can also function with IFNAR1 alone and independently of Jak-STAT pathways. Elicits a wide variety of responses, including antiviral and antibacterial activities, and can regulate the development of B-cells, myelopoiesis and lipopolysaccharide (LPS)-inducible production of tumor necrosis factor. Plays a role in neuronal homeostasis by regulating dopamine turnover and protecting dopaminergic neurons: acts by promoting neuronal autophagy and alpha-synuclein clearance, thereby preventing dopaminergic neuron loss. IFNB1 is more potent than interferon-alpha (IFN-alpha) in inducing the apoptotic and antiproliferative pathways required for control of tumor cell growth. This Mus musculus (Mouse) protein is Interferon beta.